Consider the following 588-residue polypeptide: Intracellular maltogenic amylase (588 aa).

Asn-149, Ser-155, Gly-174, and Asp-176 together coordinate Ca(2+). Residues His-249 and Arg-325 each coordinate substrate. Catalysis depends on Asp-327, which acts as the Nucleophile. Residue Glu-356 is the Proton donor of the active site. Residues 422-423, Asp-467, and Arg-471 each bind substrate; that span reads HD.

This sequence belongs to the glycosyl hydrolase 13 family. BbmA subfamily. As to quaternary structure, monomer or homodimer; in equilibrium. Requires Ca(2+) as cofactor.

Its subcellular location is the cytoplasm. Functionally, hydrolyzes beta-cyclodextrin to maltose and glucose, soluble starch to maltose and glucose, and pullulan to panose with trace amounts of maltose and glucose. It is also able to hydrolyze acarbose. Can also exhibit a transglycosylation activity transferring glucose or maltose to another moiety of sugars by forming alpha-(1,6)- and alpha-(1,3)-glycosidic linkages upon the hydrolysis of substrate at concentrations of 5% or higher. The chain is Intracellular maltogenic amylase (bbmA) from Bacillus subtilis (strain 168).